We begin with the raw amino-acid sequence, 461 residues long: L-seryl-tRNA(Sec) selenium transferase (461 aa).

Position 291 is an N6-(pyridoxal phosphate)lysine (Lys-291).

Belongs to the SelA family. Pyridoxal 5'-phosphate is required as a cofactor.

Its subcellular location is the cytoplasm. The catalysed reaction is L-seryl-tRNA(Sec) + selenophosphate + H(+) = L-selenocysteinyl-tRNA(Sec) + phosphate. The protein operates within aminoacyl-tRNA biosynthesis; selenocysteinyl-tRNA(Sec) biosynthesis; selenocysteinyl-tRNA(Sec) from L-seryl-tRNA(Sec) (bacterial route): step 1/1. In terms of biological role, converts seryl-tRNA(Sec) to selenocysteinyl-tRNA(Sec) required for selenoprotein biosynthesis. The polypeptide is L-seryl-tRNA(Sec) selenium transferase (Caldanaerobacter subterraneus subsp. tengcongensis (strain DSM 15242 / JCM 11007 / NBRC 100824 / MB4) (Thermoanaerobacter tengcongensis)).